The primary structure comprises 64 residues: Translation machinery-associated protein 7 homolog (64 aa).

The segment at 1-64 is disordered; that stretch reads MSGREGGKKK…GGGIKKSGKK (64 aa). A compositionally biased stretch (basic and acidic residues) spans 27–38; the sequence is MAFKQKQKEQQK. A coiled-coil region spans residues 27–50; it reads MAFKQKQKEQQKALEAAKANASKK. A compositionally biased stretch (low complexity) spans 39–50; it reads ALEAAKANASKK. Positions 53–64 are enriched in gly residues; that stretch reads LVGGGIKKSGKK.

This is Translation machinery-associated protein 7 homolog from Drosophila melanogaster (Fruit fly).